A 183-amino-acid polypeptide reads, in one-letter code: Secreted RxLR effector protein 41 (183 aa).

The first 18 residues, 1–18 (MLGFVTGVLAISAHVIVS), serve as a signal peptide directing secretion. The RxLR-dEER signature appears at 41–65 (RRLRSYETDTASARAEEGTSDIEER). Asn88 is a glycosylation site (N-linked (GlcNAc...) asparagine).

This sequence belongs to the RxLR effector family.

The protein resides in the secreted. It is found in the host nucleus. Its subcellular location is the host cytoplasm. Functionally, secreted effector that dos not suppress the host cell death induced by cell death-inducing proteins. In Plasmopara viticola (Downy mildew of grapevine), this protein is Secreted RxLR effector protein 41.